A 521-amino-acid chain; its full sequence is Putative FNIP repeat-containing protein L162 (521 aa).

FNIP repeat units follow at residues 179-221 (FNKS…LGYK) and 222-263 (YNYP…MGGR).

This chain is Putative FNIP repeat-containing protein L162, found in Acanthamoeba polyphaga mimivirus (APMV).